A 39-amino-acid chain; its full sequence is MTIEKIYPIFTVRWLAVHGLAVPTVFFLGSISAMQFIQR.

Residues 14–30 traverse the membrane as a helical segment; it reads WLAVHGLAVPTVFFLGS. His18 lines the heme pocket.

It belongs to the PsbE/PsbF family. Heterodimer of an alpha subunit and a beta subunit. PSII is composed of 1 copy each of membrane proteins PsbA, PsbB, PsbC, PsbD, PsbE, PsbF, PsbH, PsbI, PsbJ, PsbK, PsbL, PsbM, PsbT, PsbX, PsbY, PsbZ, Psb30/Ycf12, at least 3 peripheral proteins of the oxygen-evolving complex and a large number of cofactors. It forms dimeric complexes. The cofactor is heme b.

The protein localises to the plastid. Its subcellular location is the chloroplast thylakoid membrane. Its function is as follows. This b-type cytochrome is tightly associated with the reaction center of photosystem II (PSII). PSII is a light-driven water:plastoquinone oxidoreductase that uses light energy to abstract electrons from H(2)O, generating O(2) and a proton gradient subsequently used for ATP formation. It consists of a core antenna complex that captures photons, and an electron transfer chain that converts photonic excitation into a charge separation. The protein is Cytochrome b559 subunit beta of Welwitschia mirabilis (Tree tumbo).